The chain runs to 479 residues: Hydrogenase-4 component D (479 aa).

15 helical membrane passes run 3–23, 30–50, 55–75, 80–100, 117–137, 168–188, 208–228, 238–258, 270–290, 300–320, 330–350, 369–389, 390–410, 411–431, and 458–478; these read NLAL…SFSP, WGVL…SAFY, VAVT…LVID, LILF…TGYL, AFLL…TLLG, ALLI…TLFL, LVYG…PMQA, TPIS…YIFA, VIGG…FLMY, LAWS…LSIF, IAYI…AGAL, LPLP…VPPF, NGFF…VEYW, ILLP…AWFI, and LVLI…ATWL.

Belongs to the complex I subunit 5 family.

The protein resides in the cell inner membrane. Its function is as follows. Possible component of hydrogenase 4. In Escherichia coli (strain K12), this protein is Hydrogenase-4 component D.